The primary structure comprises 183 residues: tRNA-splicing endonuclease (183 aa).

Active-site residues include Y120, H128, and K159.

It belongs to the tRNA-intron endonuclease family. Archaeal short subfamily. Homotetramer; although the tetramer contains four active sites, only two participate in the cleavage. Therefore, it should be considered as a dimer of dimers.

It catalyses the reaction pretRNA = a 3'-half-tRNA molecule with a 5'-OH end + a 5'-half-tRNA molecule with a 2',3'-cyclic phosphate end + an intron with a 2',3'-cyclic phosphate and a 5'-hydroxyl terminus.. Functionally, endonuclease that removes tRNA introns. Cleaves pre-tRNA at the 5'- and 3'-splice sites to release the intron. The products are an intron and two tRNA half-molecules bearing 2',3' cyclic phosphate and 5'-OH termini. Recognizes a pseudosymmetric substrate in which 2 bulged loops of 3 bases are separated by a stem of 4 bp. The sequence is that of tRNA-splicing endonuclease from Pyrobaculum arsenaticum (strain DSM 13514 / JCM 11321 / PZ6).